The following is a 259-amino-acid chain: Ovulation prohormone (259 aa).

The N-terminal stretch at 1–34 (MKMSGLLSKPDYGVVGIVFTVVFCCWCSSSTTHA) is a signal peptide. Residues 35–102 (LSIAEPGRDR…SGEKTRLTAA (68 aa)) constitute a propeptide that is removed on maturation. A disordered region spans residues 42–103 (RDRYDKRSPT…GEKTRLTAAK (62 aa)). Repeats lie at residues 119–123 (RLRFH) and 146–150 (RLRFH). The tract at residues 119 to 150 (RLRFHKRRVDSADESNDDGFDRKAREPRLRFH) is 2 X 5 AA repeats of R-L-R-F-H. Residues 149-197 (FHDVRKRSATAEEGSENAEIEESHLGNSRSRRSAGSAPSSANEVQRSKR) form a disordered region. Residues 181–195 (SAGSAPSSANEVQRS) constitute a propeptide that is removed on maturation. Leu-233 carries the post-translational modification Leucine amide. A propeptide spanning residues 237–259 (GSAFFDHIPIIFGEPQYDYQPFK) is cleaved from the precursor.

This sequence belongs to the molluscan ELH family.

The protein localises to the secreted. Its function is as follows. CDCH induces ovulation and egg-mass production; it may also stimulate synthesis of secretory products in the female accessory sex glands and affect neurons in the neuronal circuits controlling locomotion and feeding. Functionally, calfluxin is involved in the influx of calcium into mitochondria of the albumen gland. CDCA (or alpha-CDCP) triggers the electrical activity of the caudodorsal cells (CDCS). This Lymnaea stagnalis (Great pond snail) protein is Ovulation prohormone.